The following is an 824-amino-acid chain: Protein bicaudal D homolog 2 (824 aa).

The residue at position 2 (S2) is an N-acetylserine. Residues 20 to 269 are a coiled coil; sequence EWLRAEVKRL…ELSHYMSIND (250 aa). Positions 25–398 are interacts with DYNLL1, DYNC1H1, DYNC1I2, DCTN1 and DCTN2; it reads EVKRLSHELA…RLTENLSALR (374 aa). Residues S190, S224, and S318 each carry the phosphoserine modification. Positions 311–330 are disordered; it reads LPLDNKTSTPKKEGLAPPSP. The residue at position 319 (T319) is a Phosphothreonine. Residues 334 to 599 are interaction with KIF5A; sequence SDLLSELNIS…LLAPEAGRAD (266 aa). A coiled-coil region spans residues 338–537; sequence SELNISEIQK…VTFSEELANL (200 aa). Phosphoserine is present on residues S343 and S395. 3 disordered regions span residues 398–425, 559–622, and 804–824; these read RRLQ…GDYY, EGQG…DPRR, and EQTR…TPSL. Residues 402–422 are compositionally biased toward basic and acidic residues; the sequence is ASKERQTALDNEKDRDSHEDG. Phosphoserine is present on residues S568, S574, and S582. Residues 590–824 form an interaction with RANBP2 region; that stretch reads LLAPEAGRAD…PKTKPATPSL (235 aa). A Phosphothreonine modification is found at T602. The segment covering 604–618 has biased composition (low complexity); that stretch reads DSSPSPGSSLPSPLS. Positions 666-808 form a coiled coil; sequence DKDKEALMEE…LELDHEQTRR (143 aa). Positions 666–814 are interacts with RAB6A; it reads DKDKEALMEE…QTRRGRAKAA (149 aa). Phosphothreonine is present on T821. Residue S823 is modified to Phosphoserine.

This sequence belongs to the BicD family. As to quaternary structure, part of a tripartite complex with dynein and dynactin, acts an adapter linking the dynein motor complex and dynactin. Interacts with CPNE4 (via VWFA domain). Interacts with RAB6A. Interacts with NEK9. Interacts with DNAI1. Interacts with DYNC1H1. Interacts with RANBP2. Binds preferentially to tyrosinated microtubules than to detyrosinated microtubules. Interacts with DYNLL1, DYNC1I2; DCTN1, DCTN2 and KIF5A. Interacts with KIF1C. Phosphorylated by NEK9 in vitro. Ubiquitous.

It localises to the golgi apparatus. Its subcellular location is the cytoplasm. It is found in the cytoskeleton. The protein resides in the nucleus envelope. The protein localises to the nucleus. It localises to the nuclear pore complex. Acts as an adapter protein linking the dynein motor complex to various cargos and converts dynein from a non-processive to a highly processive motor in the presence of dynactin. Facilitates and stabilizes the interaction between dynein and dynactin and activates dynein processivity (the ability to move along a microtubule for a long distance without falling off the track). Facilitates the binding of RAB6A to the Golgi by stabilizing its GTP-bound form. Regulates coat complex coatomer protein I (COPI)-independent Golgi-endoplasmic reticulum transport via its interaction with RAB6A and recruitment of the dynein-dynactin motor complex. Contributes to nuclear and centrosomal positioning prior to mitotic entry through regulation of both dynein and kinesin-1. During G2 phase of the cell cycle, associates with RANBP2 at the nuclear pores and recruits dynein and dynactin to the nuclear envelope to ensure proper positioning of the nucleus relative to centrosomes prior to the onset of mitosis. The polypeptide is Protein bicaudal D homolog 2 (Homo sapiens (Human)).